The sequence spans 321 residues: Ferredoxin--NADP reductase (321 aa).

Asp28, Gln36, Tyr41, Ala81, Phe115, Asp274, and Ser315 together coordinate FAD.

The protein belongs to the ferredoxin--NADP reductase type 2 family. In terms of assembly, homodimer. It depends on FAD as a cofactor.

It carries out the reaction 2 reduced [2Fe-2S]-[ferredoxin] + NADP(+) + H(+) = 2 oxidized [2Fe-2S]-[ferredoxin] + NADPH. In Frankia casuarinae (strain DSM 45818 / CECT 9043 / HFP020203 / CcI3), this protein is Ferredoxin--NADP reductase.